The primary structure comprises 146 residues: Hemoglobin subunit beta-2 (146 aa).

The 145-residue stretch at 2 to 146 folds into the Globin domain; that stretch reads EWTNFERATI…VVSSLGKQYH (145 aa). His-63 and His-92 together coordinate heme b.

The protein belongs to the globin family. As to quaternary structure, hb2 is a heterotetramer of two alpha chains and two beta-2 chains. Red blood cells.

In terms of biological role, involved in oxygen transport from gills to the various peripheral tissues. The protein is Hemoglobin subunit beta-2 (hbb2) of Cygnodraco mawsoni (Antarctic dragonfish).